The chain runs to 20 residues: Unknown protein NF019 from 2D-PAGE (20 aa).

The sequence is that of Unknown protein NF019 from 2D-PAGE from Naegleria fowleri (Brain eating amoeba).